Here is a 70-residue protein sequence, read N- to C-terminus: Large ribosomal subunit protein bL31 (70 aa).

Zn(2+) is bound by residues C17, C19, C37, and C40.

The protein belongs to the bacterial ribosomal protein bL31 family. Type A subfamily. In terms of assembly, part of the 50S ribosomal subunit. Zn(2+) is required as a cofactor.

Functionally, binds the 23S rRNA. The sequence is that of Large ribosomal subunit protein bL31 from Clostridium kluyveri (strain NBRC 12016).